A 215-amino-acid polypeptide reads, in one-letter code: Glycerol-3-phosphate acyltransferase (215 aa).

A run of 5 helical transmembrane segments spans residues 1–21 (MAFL…SIPT), 57–77 (IFVL…VKLW), 85–105 (MIPL…AVLG), 126–146 (VLLV…LAML), and 165–185 (VLMF…IVGL).

This sequence belongs to the PlsY family. Probably interacts with PlsX.

It localises to the cell inner membrane. The catalysed reaction is an acyl phosphate + sn-glycerol 3-phosphate = a 1-acyl-sn-glycero-3-phosphate + phosphate. It functions in the pathway lipid metabolism; phospholipid metabolism. Functionally, catalyzes the transfer of an acyl group from acyl-phosphate (acyl-PO(4)) to glycerol-3-phosphate (G3P) to form lysophosphatidic acid (LPA). This enzyme utilizes acyl-phosphate as fatty acyl donor, but not acyl-CoA or acyl-ACP. This chain is Glycerol-3-phosphate acyltransferase, found in Crocosphaera subtropica (strain ATCC 51142 / BH68) (Cyanothece sp. (strain ATCC 51142)).